The chain runs to 426 residues: uncharacterized protein (426 aa).

This sequence belongs to the serpin family.

This is an uncharacterized protein from Methanosarcina mazei (strain ATCC BAA-159 / DSM 3647 / Goe1 / Go1 / JCM 11833 / OCM 88) (Methanosarcina frisia).